We begin with the raw amino-acid sequence, 47 residues long: U18-ctenitoxin-Pn1a (47 aa).

5 cysteine pairs are disulfide-bonded: Cys2/Cys16, Cys9/Cys22, Cys13/Cys46, Cys15/Cys34, and Cys24/Cys32.

Expressed by the venom gland.

Its subcellular location is the secreted. Functionally, neurotoxin. Causes spastic paralysis and death in mice by intracerebroventricular injection at dose levels of 3 ug per mouse. This is U18-ctenitoxin-Pn1a from Phoneutria nigriventer (Brazilian armed spider).